The following is a 34-amino-acid chain: Non-toxic venom protein (34 aa).

The LCN-type CS-alpha/beta domain maps to 1–34 (KEGYPTNSEGCKITXLFNDPYCKGXCINLSTQAD).

As to expression, expressed by the venom gland.

Its subcellular location is the secreted. Its function is as follows. Does not cause symptoms of intoxication, paralysis or death in insects (A.domestica). The polypeptide is Non-toxic venom protein (Rhopalurus junceus (Caribbean blue scorpion)).